The chain runs to 181 residues: Probable pyruvoyl-dependent arginine decarboxylase (181 aa).

Ser-43 carries the pyruvic acid (Ser) modification.

The protein belongs to the PdaD family. Pyruvate is required as a cofactor.

It carries out the reaction L-arginine + H(+) = agmatine + CO2. This is Probable pyruvoyl-dependent arginine decarboxylase from Chlorobium limicola (strain DSM 245 / NBRC 103803 / 6330).